Consider the following 415-residue polypeptide: 3-isopropylmalate dehydratase large subunit (415 aa).

Residues cysteine 295, cysteine 353, and cysteine 356 each coordinate [4Fe-4S] cluster.

It belongs to the aconitase/IPM isomerase family. LeuC type 2 subfamily. In terms of assembly, heterodimer of LeuC and LeuD. It depends on [4Fe-4S] cluster as a cofactor.

It catalyses the reaction (2R,3S)-3-isopropylmalate = (2S)-2-isopropylmalate. The protein operates within amino-acid biosynthesis; L-leucine biosynthesis; L-leucine from 3-methyl-2-oxobutanoate: step 2/4. In terms of biological role, catalyzes the isomerization between 2-isopropylmalate and 3-isopropylmalate, via the formation of 2-isopropylmaleate. The polypeptide is 3-isopropylmalate dehydratase large subunit (Pyrobaculum aerophilum (strain ATCC 51768 / DSM 7523 / JCM 9630 / CIP 104966 / NBRC 100827 / IM2)).